A 340-amino-acid chain; its full sequence is Ephrin-B3 (340 aa).

A signal peptide spans 1-27 (MGAPHFGPGGVQVGALLLLGFAGLVSG). An Ephrin RBD domain is found at 28-167 (LSLEPVYWNS…TRGMKVLLRV (140 aa)). Topologically, residues 28–227 (LSLEPVYWNS…GPLPPPSMPA (200 aa)) are extracellular. Cystine bridges form between C62-C104 and C92-C156. The segment at 168–227 (GQSPRGGAVPRKPVSEMPMERDRGAAHSAEPGRDTIPGDPSSNATSRGAEGPLPPPSMPA) is disordered. Positions 185–200 (PMERDRGAAHSAEPGR) are enriched in basic and acidic residues. N-linked (GlcNAc...) asparagine glycosylation occurs at N210. A helical transmembrane segment spans residues 228–248 (VAGAAGGMALLLLGVAGAGGA). Over 249–340 (MCWRRRRAKP…QSPPNIYYKV (92 aa)) the chain is Cytoplasmic. The tract at residues 254–300 (RRAKPSESRHPGPGSFGRGGSLGLGGGGGMGPREAEPGELGIALRGG) is disordered. A compositionally biased stretch (gly residues) spans 267–284 (GSFGRGGSLGLGGGGGMG). Omega-N-methylarginine is present on R271. Position 274 is a phosphoserine (S274). The PDZ-binding signature appears at 338-340 (YKV).

Belongs to the ephrin family. In terms of assembly, interacts with GRIP1 and GRIP2. In terms of tissue distribution, expressed on lateral floor plate cells, specifically on commissural axon segments that have passed through the floor plate. Expressed in cells of the retinal ganglion cell layer during retinal axon guidance to the optic disk. Expressed in myogenic progenitor cells.

Its subcellular location is the membrane. In terms of biological role, cell surface transmembrane ligand for Eph receptors, a family of receptor tyrosine kinases which are crucial for migration, repulsion and adhesion during neuronal, vascular and epithelial development. Binds promiscuously Eph receptors residing on adjacent cells, leading to contact-dependent bidirectional signaling into neighboring cells. The signaling pathway downstream of the receptor is referred to as forward signaling while the signaling pathway downstream of the ephrin ligand is referred to as reverse signaling. May play a pivotal role in forebrain function. Binds to, and induce the collapse of, commissural axons/growth cones in vitro. May play a role in constraining the orientation of longitudinally projecting axons. This chain is Ephrin-B3 (Efnb3), found in Mus musculus (Mouse).